The chain runs to 635 residues: Threonine--tRNA ligase (635 aa).

The TGS domain occupies 1-61 (MIQITLPDNS…DHDARLQIIT (61 aa)). The catalytic stretch occupies residues 242-533 (DHRKLGKELD…LIEHHAGALP (292 aa)). Zn(2+) contacts are provided by C333, H384, and H510.

This sequence belongs to the class-II aminoacyl-tRNA synthetase family. Homodimer. Zn(2+) serves as cofactor.

Its subcellular location is the cytoplasm. It catalyses the reaction tRNA(Thr) + L-threonine + ATP = L-threonyl-tRNA(Thr) + AMP + diphosphate + H(+). Functionally, catalyzes the attachment of threonine to tRNA(Thr) in a two-step reaction: L-threonine is first activated by ATP to form Thr-AMP and then transferred to the acceptor end of tRNA(Thr). Also edits incorrectly charged L-seryl-tRNA(Thr). This is Threonine--tRNA ligase from Variovorax paradoxus (strain S110).